We begin with the raw amino-acid sequence, 174 residues long: Glutamyl-tRNA(Gln) amidotransferase subunit F, mitochondrial (174 aa).

The protein belongs to the GatF family. As to quaternary structure, subunit of the heterotrimeric GatFAB amidotransferase (AdT) complex, composed of A, B and F subunits.

The protein localises to the mitochondrion inner membrane. It catalyses the reaction L-glutamyl-tRNA(Gln) + L-glutamine + ATP + H2O = L-glutaminyl-tRNA(Gln) + L-glutamate + ADP + phosphate + H(+). In terms of biological role, allows the formation of correctly charged Gln-tRNA(Gln) through the transamidation of misacylated Glu-tRNA(Gln) in the mitochondria. The reaction takes place in the presence of glutamine and ATP through an activated gamma-phospho-Glu-tRNA(Gln). Required for proper protein synthesis within the mitochondrion. This chain is Glutamyl-tRNA(Gln) amidotransferase subunit F, mitochondrial, found in Kluyveromyces lactis (strain ATCC 8585 / CBS 2359 / DSM 70799 / NBRC 1267 / NRRL Y-1140 / WM37) (Yeast).